The sequence spans 490 residues: Betaine aldehyde dehydrogenase (490 aa).

The K(+) site is built by Thr26, Ile27, and Asp93. Gly150–Trp152 serves as a coordination point for NAD(+). The active-site Charge relay system is Lys162. Lys176 to Glu179 lines the NAD(+) pocket. A K(+)-binding site is contributed by Val180. Gly230–Ser233 contributes to the NAD(+) binding site. Leu246 serves as a coordination point for K(+). Residue Glu252 is the Proton acceptor of the active site. Positions 254, 286, and 387 each coordinate NAD(+). The Nucleophile role is filled by Cys286. Position 286 is a cysteine sulfenic acid (-SOH) (Cys286). The K(+) site is built by Lys457 and Gly460. Glu464 (charge relay system) is an active-site residue.

It belongs to the aldehyde dehydrogenase family. Dimer of dimers. K(+) serves as cofactor.

The catalysed reaction is betaine aldehyde + NAD(+) + H2O = glycine betaine + NADH + 2 H(+). The protein operates within amine and polyamine biosynthesis; betaine biosynthesis via choline pathway; betaine from betaine aldehyde: step 1/1. Functionally, involved in the biosynthesis of the osmoprotectant glycine betaine. Catalyzes the irreversible oxidation of betaine aldehyde to the corresponding acid. The protein is Betaine aldehyde dehydrogenase of Klebsiella pneumoniae (strain 342).